The primary structure comprises 566 residues: MLSISKTKMDFLEEGRWKDPFDELLDSRTKLSKMNIVKQNVRVTYNIDSSVENSSYIEIKEPNHKNEPLTLEDCSIKVYCPSDSISTPCDKRLGGTTGLFETDLSPITRLKLEGVEDSRDKCADTNEADLYVNVEILFQNINSSPKKCSNFGKKRLSNLNKMVTAVHPSISLNPGKWRKSLNNFIRSKITETNFTKKVERRSSICQDRKSLVLKGEHKFENKYEEDVLKYCHQCTPLPFNTAYEQHKLLNTKKIGEGAYGEVFRCSRNQEVLKDHISDIVLKIIPLEGSTVINGEKQKTFSQILPEIIITKKMCSLRTSKTNSTNGFVSIQKVSLVKGRYPPHFIKLWEKYDNEKGSENDHPELFGDNQLFAVLELKFAGSDMANFKFLNSEQSYYALQQIILALAVGEEEYQFEHRDLHLGNILIEYTNKKHIVCTFKSSNLTLLSKGVNVTIIDYTLSRVTINDCCYFNDLSRDEELFQATGDYQYDVYRMMRNELKNNWSSFSPKTNIIWLSYVIVKVLDSVKYKSINTKVHRMYIDKIKELKNIIMTFESASHCANYLFNLN.

Residues 248-566 (LLNTKKIGEG…HCANYLFNLN (319 aa)) enclose the Protein kinase domain. Residues 254 to 262 (IGEGAYGEV), lysine 282, 377 to 382 (KFAGSD), 418 to 423 (DLHLGN), and 456 to 458 (DYT) each bind ATP. Aspartate 418 serves as the catalytic Proton acceptor.

The protein belongs to the protein kinase superfamily. Ser/Thr protein kinase family. Haspin subfamily. As to quaternary structure, interacts with pds5 and vtd. Requires Mg(2+) as cofactor.

The protein localises to the nucleus lamina. It is found in the chromosome. It localises to the cytoplasm. Its subcellular location is the cytoskeleton. The protein resides in the spindle. It catalyses the reaction L-seryl-[protein] + ATP = O-phospho-L-seryl-[protein] + ADP + H(+). It carries out the reaction L-threonyl-[protein] + ATP = O-phospho-L-threonyl-[protein] + ADP + H(+). Serine/threonine-protein kinase that phosphorylates histone H3 at 'Thr-4' (H3T3ph) during mitosis and interphase. Function is essential for chromosome organization during mitosis and genome organization in interphase cells, thus playing a functional role in gene regulation. During mitosis, may act through H3T3ph to both position and modulate activation of AURKB and other components of the chromosomal passenger complex (CPC) at centromeres to ensure proper chromatid cohesion, metaphase alignment and normal progression through the cell cycle. During interphase, associates with the cohesion complex and mediates pds5 binding to chromatin to ensure correct sister chromatid cohesion, chromatin organization, and also functions with Pds5-cohesin to modify Polycomb-dependent homeotic transformations. Function during interphase is required for insulator activity, nuclear compaction, heterochromatin-induced position-effect variegation and PcG-mediated pairing-sensitive silencing. The sequence is that of Serine/threonine-protein kinase haspin homolog from Drosophila melanogaster (Fruit fly).